Consider the following 436-residue polypeptide: MSDRQQVTNSRGERIAIVAGLRTPFAKQATAFHGVSALDMGKMVVNELLSRSEIDPQLIEQLVYGQVVQMPAAPNIAREIVLGTGMNVSTDAYSVTRACATSFQSAVNVAESIMTGNIEIGLAGGSDSSSVLPIGVSKKLAHALVDLNKARTFKQKFAIARRLGLKDLMPVPPAVAEYSTGLSMGQTAEQMAKTYNISRADQDALAHRSHTLATETWNSGHLRNEVMTAHIPPYKQFIDRDNNIRENSVLESYAKLRPAFDRKHGTVTAANSTPLTDGASAIILMSEGRAKALGYQPIGYIKSYAFTAIDVWQDMLMGPSYATPLALKRAGMELEDLTLIEMHEAFAAQTLANMQMFGSKKFAEEKLGRNRAIGEIDMSKFNVLGGSLAYGHPFAATGTRLITQVCNELKRRGGGTGLATACAAGGLGAAMILEVE.

Cys-99 acts as the Acyl-thioester intermediate in catalysis. Active-site proton acceptor residues include His-392 and Cys-422.

This sequence belongs to the thiolase-like superfamily. Thiolase family. As to quaternary structure, heterotetramer of two alpha chains (FadJ) and two beta chains (FadI).

It is found in the cytoplasm. It catalyses the reaction an acyl-CoA + acetyl-CoA = a 3-oxoacyl-CoA + CoA. Its pathway is lipid metabolism; fatty acid beta-oxidation. In terms of biological role, catalyzes the final step of fatty acid oxidation in which acetyl-CoA is released and the CoA ester of a fatty acid two carbons shorter is formed. This is 3-ketoacyl-CoA thiolase from Shewanella frigidimarina (strain NCIMB 400).